Reading from the N-terminus, the 36-residue chain is Cecropin-D (36 aa).

A Lysine amide modification is found at lysine 36.

It belongs to the cecropin family.

The protein resides in the secreted. Cecropins have lytic and antibacterial activity against several Gram-positive and Gram-negative bacteria. The chain is Cecropin-D from Antheraea pernyi (Chinese oak silk moth).